We begin with the raw amino-acid sequence, 299 residues long: Elongation factor Ts, mitochondrial (299 aa).

The N-terminal 18 residues, 1 to 18 (MLFQRRLHFHQFFGKTRV), are a transit peptide targeting the mitochondrion.

This sequence belongs to the EF-Ts family.

It localises to the mitochondrion. In terms of biological role, associates with the EF-Tu.GDP complex and induces the exchange of GDP to GTP. It remains bound to the aminoacyl-tRNA.EF-Tu.GTP complex up to the GTP hydrolysis stage on the ribosome. In Schizosaccharomyces pombe (strain 972 / ATCC 24843) (Fission yeast), this protein is Elongation factor Ts, mitochondrial (tsf1).